Here is a 418-residue protein sequence, read N- to C-terminus: NADH-quinone oxidoreductase subunit D (418 aa).

It belongs to the complex I 49 kDa subunit family. In terms of assembly, NDH-1 is composed of 14 different subunits. Subunits NuoB, C, D, E, F, and G constitute the peripheral sector of the complex.

The protein localises to the cell inner membrane. It carries out the reaction a quinone + NADH + 5 H(+)(in) = a quinol + NAD(+) + 4 H(+)(out). In terms of biological role, NDH-1 shuttles electrons from NADH, via FMN and iron-sulfur (Fe-S) centers, to quinones in the respiratory chain. The immediate electron acceptor for the enzyme in this species is believed to be ubiquinone. Couples the redox reaction to proton translocation (for every two electrons transferred, four hydrogen ions are translocated across the cytoplasmic membrane), and thus conserves the redox energy in a proton gradient. This Methylacidiphilum infernorum (isolate V4) (Methylokorus infernorum (strain V4)) protein is NADH-quinone oxidoreductase subunit D.